Consider the following 317-residue polypeptide: MSQEYLDFELPIAELEAKIESLRSVCAQDGKIDLEDEINRLQHKSQELTKKTFANLDAWQVSRMARHPNRPYTLDYIEHIFTEFDELAGDRAFADDKAIVGGIARLDGRPVMVIGHQKGRVTKEKVKRNFGMPAPEGYRKALRLMEMAERFKMPIITFIDTPGAYPGIGAEERGQAEAIARNLREMSQLSVPIICTVIGEGGSGGALAIGVGDKVNMLQYSTYSVISPEGCASILWKSAEKASMAAEVMGLTAQRLKELNLIDGIVDEPLGGAHRDVLKIAHNLKQQILADLAELDSLTTEALLERRYERLMSYGYV.

The region spanning 40 to 294 (RLQHKSQELT…KQQILADLAE (255 aa)) is the CoA carboxyltransferase C-terminal domain.

Belongs to the AccA family. In terms of assembly, acetyl-CoA carboxylase is a heterohexamer composed of biotin carboxyl carrier protein (AccB), biotin carboxylase (AccC) and two subunits each of ACCase subunit alpha (AccA) and ACCase subunit beta (AccD).

Its subcellular location is the cytoplasm. It carries out the reaction N(6)-carboxybiotinyl-L-lysyl-[protein] + acetyl-CoA = N(6)-biotinyl-L-lysyl-[protein] + malonyl-CoA. The protein operates within lipid metabolism; malonyl-CoA biosynthesis; malonyl-CoA from acetyl-CoA: step 1/1. Functionally, component of the acetyl coenzyme A carboxylase (ACC) complex. First, biotin carboxylase catalyzes the carboxylation of biotin on its carrier protein (BCCP) and then the CO(2) group is transferred by the carboxyltransferase to acetyl-CoA to form malonyl-CoA. The polypeptide is Acetyl-coenzyme A carboxylase carboxyl transferase subunit alpha (Haemophilus ducreyi (strain 35000HP / ATCC 700724)).